Here is a 379-residue protein sequence, read N- to C-terminus: Armadillo repeat-containing X-linked protein 3 (379 aa).

At 1–6 (MGYARK) the chain is on the mitochondrial intermembrane side. Mitochondrion outer membrane (MOM)-targeting sequence regions lie at residues 1 to 6 (MGYARK) and 26 to 37 (RLTRGRKQNKEK). A helical; Signal-anchor membrane pass occupies residues 7 to 29 (VGWVTAGLVIGAGACYCIYRLTR). Over 30–379 (GRKQNKEKMA…AEHMFPKSQE (350 aa)) the chain is Cytoplasmic. 3 positions are modified to phosphoserine: S61, S67, and S72. Residues 89–98 (RARARARARA) form a nuclear localization signal region. S110 carries the post-translational modification Phosphoserine. ARM repeat units follow at residues 111 to 151 (PNSD…NNAA), 153 to 192 (AFNR…NLSV), and 233 to 272 (VTNE…NLAE).

Belongs to the eutherian X-chromosome-specific Armcx family. In terms of assembly, interacts (via ARM domain) with MIRO1, MIRO2 and TRAK2. The interaction with Miro is calcium-dependent. Interacts with SOX10.

It localises to the mitochondrion outer membrane. The protein resides in the cytoplasm. It is found in the nucleus. Functionally, regulates mitochondrial aggregation and transport in axons in living neurons. May link mitochondria to the TRAK2-kinesin motor complex via its interaction with Miro and TRAK2. Mitochondrial distribution and dynamics is regulated through ARMCX3 protein degradation, which is promoted by PCK and negatively regulated by WNT1. Enhances the SOX10-mediated transactivation of the neuronal acetylcholine receptor subunit alpha-3 and beta-4 subunit gene promoters. This Pongo abelii (Sumatran orangutan) protein is Armadillo repeat-containing X-linked protein 3 (ARMCX3).